The chain runs to 89 residues: Small ribosomal subunit protein bS16 (89 aa).

This sequence belongs to the bacterial ribosomal protein bS16 family.

The sequence is that of Small ribosomal subunit protein bS16 from Nitrosomonas europaea (strain ATCC 19718 / CIP 103999 / KCTC 2705 / NBRC 14298).